Consider the following 381-residue polypeptide: MRVAIGQAGGPTSVINESLASFVSTFSDDDIYLVLNGYEGLATNQMKAMGEMQRETIERSRGEPGAVLGSGRYDFSPALQKQALAYLMERRIEALVFIGGNGTMSALHAVQHLAEEAGYPLKVIGIPKTVDNDIAGIDHAPGFGSAAKYVAQSARYSKMDLQAMRNFEQVRILETMGRNVGWLAQASGYGMTEEAGPDAIYVPEREYSLETILGDVRRAWKEKGYCLLVISEGVTINNQQTALSNSRGRTILGGVSKVIEEAVREKLELVSRAEQLGMNQRCYYPAVSKVDQQEAAAVGTYAAKLVQNGESGFMVGVHRHDTMNYKAELTRVPLQIVSDGGERLLPDTYIEERKAYNEWLEGIIDLPPVSTQTQAGSSSIL.

Residues G10, 72-73, and 100-103 each bind ATP; these read RY and GNGT. Residue N101 participates in Mg(2+) binding. The Proton acceptor role is filled by D131.

It belongs to the phosphofructokinase type A (PFKA) family. Mg(2+) is required as a cofactor.

The catalysed reaction is 6-deoxy-6-sulfo-D-fructose + ATP = 6-deoxy-6-sulfo-D-fructose 1-phosphate + ADP + H(+). In terms of biological role, part of the sulfo-EMP2 pathway, a D-sulfoquinovose degradation pathway that produces sulfolactate (SL). Phosphorylates 6-deoxy-6-sulfo-D-fructose (SF) to 6-deoxy-6-sulfo-D-fructose 1-phosphate (SFP). This chain is Sulfofructose kinase, found in Alkalicoccus urumqiensis (Bacillus urumqiensis).